The following is a 622-amino-acid chain: Chaperone protein HscA homolog (622 aa).

Belongs to the heat shock protein 70 family.

In terms of biological role, chaperone involved in the maturation of iron-sulfur cluster-containing proteins. Has a low intrinsic ATPase activity which is markedly stimulated by HscB. The sequence is that of Chaperone protein HscA homolog from Burkholderia cenocepacia (strain HI2424).